The following is a 208-amino-acid chain: 3,4-dihydroxy-2-butanone 4-phosphate synthase (208 aa).

Phosphothreonine is present on Thr-3. Glu-27 contributes to the Mg(2+) binding site. Residue Asp-31 participates in D-ribulose 5-phosphate binding. At Cys-56 the chain carries S-glutathionyl cysteine; by GRX2. Residues Thr-88 and 145–149 contribute to the D-ribulose 5-phosphate site; that span reads RRGHT. His-148 serves as a coordination point for Mg(2+).

It belongs to the DHBP synthase family. Homodimer. It depends on Mg(2+) as a cofactor. Mn(2+) is required as a cofactor. S-glutathionylation of Cys-56 is reversible and dependent on the cytoplasmic isoform of glutaredoxin-2.

It is found in the cytoplasm. It localises to the nucleus. The protein localises to the mitochondrion intermembrane space. It catalyses the reaction D-ribulose 5-phosphate = (2S)-2-hydroxy-3-oxobutyl phosphate + formate + H(+). It functions in the pathway cofactor biosynthesis; riboflavin biosynthesis; 2-hydroxy-3-oxobutyl phosphate from D-ribulose 5-phosphate: step 1/1. Functionally, catalyzes the conversion of D-ribulose 5-phosphate to formate and 3,4-dihydroxy-2-butanone 4-phosphate. Also has an unrelated function in expression of mitochondrial respiration. This Saccharomyces cerevisiae (strain ATCC 204508 / S288c) (Baker's yeast) protein is 3,4-dihydroxy-2-butanone 4-phosphate synthase (RIB3).